Reading from the N-terminus, the 280-residue chain is RAD52 motif-containing protein 1 (280 aa).

The RRM domain occupies 18-101; that stretch reads KTIFIWDIQP…SPLKVRLSTK (84 aa).

Homodimer.

The protein resides in the nucleus. It is found in the cytoplasm. Its subcellular location is the nucleolus. Its function is as follows. May confer resistance to the antitumor agent cisplatin. Binds to DNA and RNA. This Danio rerio (Zebrafish) protein is RAD52 motif-containing protein 1 (rdm1).